Consider the following 252-residue polypeptide: Ribosomal RNA small subunit methyltransferase A (252 aa).

Residues Asn-11, Leu-13, Gly-38, Glu-60, Asp-82, and Asn-99 each contribute to the S-adenosyl-L-methionine site.

It belongs to the class I-like SAM-binding methyltransferase superfamily. rRNA adenine N(6)-methyltransferase family. RsmA subfamily.

It localises to the cytoplasm. It catalyses the reaction adenosine(1518)/adenosine(1519) in 16S rRNA + 4 S-adenosyl-L-methionine = N(6)-dimethyladenosine(1518)/N(6)-dimethyladenosine(1519) in 16S rRNA + 4 S-adenosyl-L-homocysteine + 4 H(+). In terms of biological role, specifically dimethylates two adjacent adenosines (A1518 and A1519) in the loop of a conserved hairpin near the 3'-end of 16S rRNA in the 30S particle. May play a critical role in biogenesis of 30S subunits. The protein is Ribosomal RNA small subunit methyltransferase A of Hydrogenobaculum sp. (strain Y04AAS1).